The chain runs to 314 residues: Ribosomal protein L11 methyltransferase (314 aa).

Residues Thr-161, Gly-182, Asp-204, and Asn-248 each contribute to the S-adenosyl-L-methionine site.

This sequence belongs to the methyltransferase superfamily. PrmA family.

The protein localises to the cytoplasm. The catalysed reaction is L-lysyl-[protein] + 3 S-adenosyl-L-methionine = N(6),N(6),N(6)-trimethyl-L-lysyl-[protein] + 3 S-adenosyl-L-homocysteine + 3 H(+). Functionally, methylates ribosomal protein L11. This Listeria monocytogenes serotype 1/2a (strain 10403S) protein is Ribosomal protein L11 methyltransferase.